The chain runs to 432 residues: Adenylosuccinate synthetase (432 aa).

Residues 13–19 and 41–43 contribute to the GTP site; these read GDEGKGK and GHT. Asp-14 (proton acceptor) is an active-site residue. 2 residues coordinate Mg(2+): Asp-14 and Gly-41. IMP contacts are provided by residues 14-17, 39-42, Thr-130, Arg-144, Gln-225, Thr-240, and Arg-304; these read DEGK and NAGH. His-42 functions as the Proton donor in the catalytic mechanism. 300–306 provides a ligand contact to substrate; the sequence is ATTGRRR. Residues Arg-306, 332-334, and 415-417 each bind GTP; these read KLD and STG.

This sequence belongs to the adenylosuccinate synthetase family. As to quaternary structure, homodimer. Mg(2+) is required as a cofactor.

It is found in the cytoplasm. It catalyses the reaction IMP + L-aspartate + GTP = N(6)-(1,2-dicarboxyethyl)-AMP + GDP + phosphate + 2 H(+). The protein operates within purine metabolism; AMP biosynthesis via de novo pathway; AMP from IMP: step 1/2. Functionally, plays an important role in the de novo pathway of purine nucleotide biosynthesis. Catalyzes the first committed step in the biosynthesis of AMP from IMP. The chain is Adenylosuccinate synthetase from Salmonella arizonae (strain ATCC BAA-731 / CDC346-86 / RSK2980).